Reading from the N-terminus, the 374-residue chain is N5-carboxyaminoimidazole ribonucleotide synthase (374 aa).

ATP-binding positions include Arg108, Lys148, 153–159, 183–186, Glu191, His214, and 266–267; these read GYDGKGQ, EKYL, and NE. One can recognise an ATP-grasp domain in the interval 112–296; that stretch reads KETLKSAGTK…QFDTHILAVT (185 aa).

Belongs to the PurK/PurT family. In terms of assembly, homodimer.

It carries out the reaction 5-amino-1-(5-phospho-beta-D-ribosyl)imidazole + hydrogencarbonate + ATP = 5-carboxyamino-1-(5-phospho-D-ribosyl)imidazole + ADP + phosphate + 2 H(+). It participates in purine metabolism; IMP biosynthesis via de novo pathway; 5-amino-1-(5-phospho-D-ribosyl)imidazole-4-carboxylate from 5-amino-1-(5-phospho-D-ribosyl)imidazole (N5-CAIR route): step 1/2. Functionally, catalyzes the ATP-dependent conversion of 5-aminoimidazole ribonucleotide (AIR) and HCO(3)(-) to N5-carboxyaminoimidazole ribonucleotide (N5-CAIR). The protein is N5-carboxyaminoimidazole ribonucleotide synthase of Staphylococcus aureus (strain MRSA252).